Here is a 696-residue protein sequence, read N- to C-terminus: Probable E3 ubiquitin ligase complex SCF subunit sconB (696 aa).

The span at 1–12 (MDAHELSFRDGH) shows a compositional bias: basic and acidic residues. A disordered region spans residues 1–72 (MDAHELSFRD…HSFNTQKPIR (72 aa)). A compositionally biased stretch (polar residues) spans 55–69 (PGSTQDKPHSFNTQK). The F-box domain maps to 193 to 239 (IDFLTALPPEISFKILCYLDTTSLCKAAQVSRRWRALADDDVVWHRM). The disordered stretch occupies residues 290–314 (SATIETAAAGSKRKPESGKEDTAMV). The segment covering 302–313 (RKPESGKEDTAM) has biased composition (basic and acidic residues). WD repeat units follow at residues 365–402 (GHSNGIMCLQFEDNILATGSYDATIKIWDTETGEELRT), 405–444 (GHQSGIRCLQFDDTKLISGSMDHTLKVWNWRTGECISTYS), 446–482 (HRGGVVGLHFDATILASGSVDKTVKIWNFEDKSTCLL), 484–525 (GHTD…RTFH), 579–622 (DTPS…CLRT), 623–662 (FFGHLEGVWALAADTLRIVSGAEDRMVKIWDPRTGKCERT), and 665–696 (GHSGPVTCIGLGDSRFATGSEDCEVRMYSFQT). The tract at residues 554-596 (NVSVTSGDSPAASPQALPGFDGQTSDTPSSAFGPAFDDGRPSP) is disordered.

It belongs to the WD repeat MET30/SCONB/SCON-2 family. Component of the SCF(sconB) E3 ubiquitin ligase complex.

It participates in protein modification; protein ubiquitination. Functionally, component of the SCF(sconB) E3 ubiquitin ligase complex involved in the regulation of sulfur metabolite repression, probably by mediating the inactivation or degradation of the metR transcription factor. The chain is Probable E3 ubiquitin ligase complex SCF subunit sconB (sconB) from Aspergillus fumigatus (strain ATCC MYA-4609 / CBS 101355 / FGSC A1100 / Af293) (Neosartorya fumigata).